The primary structure comprises 1305 residues: DNA-directed DNA polymerase (1305 aa).

It belongs to the DNA polymerase type-C family.

It carries out the reaction DNA(n) + a 2'-deoxyribonucleoside 5'-triphosphate = DNA(n+1) + diphosphate. Replicates viral genomic DNA. The sequence is that of DNA-directed DNA polymerase from Bacillus pumilus (Bacillus mesentericus).